The chain runs to 393 residues: Formate-dependent phosphoribosylglycinamide formyltransferase (393 aa).

Residues 22 to 23 (EL) and glutamate 82 each bind N(1)-(5-phospho-beta-D-ribosyl)glycinamide. ATP-binding positions include arginine 114, lysine 155, 160–165 (SSGKGQ), 195–198 (EGFI), and glutamate 203. The 190-residue stretch at 119–308 (RLAAEELKLP…QFALHARAIL (190 aa)) folds into the ATP-grasp domain. Mg(2+) is bound by residues glutamate 267 and glutamate 279. N(1)-(5-phospho-beta-D-ribosyl)glycinamide-binding positions include aspartate 286, lysine 356, and 363–364 (RR).

Belongs to the PurK/PurT family. In terms of assembly, homodimer.

The enzyme catalyses N(1)-(5-phospho-beta-D-ribosyl)glycinamide + formate + ATP = N(2)-formyl-N(1)-(5-phospho-beta-D-ribosyl)glycinamide + ADP + phosphate + H(+). Its pathway is purine metabolism; IMP biosynthesis via de novo pathway; N(2)-formyl-N(1)-(5-phospho-D-ribosyl)glycinamide from N(1)-(5-phospho-D-ribosyl)glycinamide (formate route): step 1/1. Involved in the de novo purine biosynthesis. Catalyzes the transfer of formate to 5-phospho-ribosyl-glycinamide (GAR), producing 5-phospho-ribosyl-N-formylglycinamide (FGAR). Formate is provided by PurU via hydrolysis of 10-formyl-tetrahydrofolate. This Pseudomonas savastanoi pv. phaseolicola (strain 1448A / Race 6) (Pseudomonas syringae pv. phaseolicola (strain 1448A / Race 6)) protein is Formate-dependent phosphoribosylglycinamide formyltransferase.